The following is a 307-amino-acid chain: MAEITAAAVKALRERTGAGMMDCKKALNEANGEMEAAVDWLRAKGLAAAAKKSGRQAAEGLVGVMIDGTKGAVLEVNSETDFVAKNEKFQDFVKGVTALVLEHGSDIDTLSKAPHPAGGSVNDVLTANIATIGENQALRRAALLEVENGVVVPYIHNQVAPGVGKIGVLVALESEAPSDFLESLGKQIAMHVAAATPLALDEDSLDDAAVERERAIAQEKAAESGKPAEIVTRMVEGAVAKYRKENALLSQIFVVDGKTRVSDVVSKAAKETGKPITLKQFVRFQLGEGIEKQETDFAAEVAAAAGV.

Positions 80–83 (TDFV) are involved in Mg(2+) ion dislocation from EF-Tu.

It belongs to the EF-Ts family.

Its subcellular location is the cytoplasm. In terms of biological role, associates with the EF-Tu.GDP complex and induces the exchange of GDP to GTP. It remains bound to the aminoacyl-tRNA.EF-Tu.GTP complex up to the GTP hydrolysis stage on the ribosome. This chain is Elongation factor Ts (tsf), found in Zymomonas mobilis subsp. mobilis (strain ATCC 31821 / ZM4 / CP4).